A 282-amino-acid chain; its full sequence is NADPH-dependent 7-cyano-7-deazaguanine reductase (282 aa).

88 to 90 lines the substrate pocket; it reads IES. 90 to 91 is an NADPH binding site; the sequence is SK. Residue C190 is the Thioimide intermediate of the active site. D197 serves as the catalytic Proton donor. Substrate is bound at residue 229–230; the sequence is HE. 258–259 lines the NADPH pocket; sequence RG.

The protein belongs to the GTP cyclohydrolase I family. QueF type 2 subfamily. In terms of assembly, homodimer.

It localises to the cytoplasm. It carries out the reaction 7-aminomethyl-7-carbaguanine + 2 NADP(+) = 7-cyano-7-deazaguanine + 2 NADPH + 3 H(+). Its pathway is tRNA modification; tRNA-queuosine biosynthesis. Catalyzes the NADPH-dependent reduction of 7-cyano-7-deazaguanine (preQ0) to 7-aminomethyl-7-deazaguanine (preQ1). The sequence is that of NADPH-dependent 7-cyano-7-deazaguanine reductase from Escherichia coli O45:K1 (strain S88 / ExPEC).